The chain runs to 358 residues: Probable D-xylulose reductase A (358 aa).

Positions 47, 72, and 73 each coordinate Zn(2+). NAD(+) is bound at residue G182 to G187.

This sequence belongs to the zinc-containing alcohol dehydrogenase family. Zn(2+) serves as cofactor.

The catalysed reaction is xylitol + NAD(+) = D-xylulose + NADH + H(+). It functions in the pathway carbohydrate degradation; L-arabinose degradation via L-arabinitol; D-xylulose 5-phosphate from L-arabinose (fungal route): step 4/5. In terms of biological role, xylitol dehydrogenase which catalyzes the conversion of xylitol to D-xylulose. Xylose is a major component of hemicelluloses such as xylan. Most fungi utilize D-xylose via three enzymatic reactions, xylose reductase (XR), xylitol dehydrogenase (XDH), and xylulokinase, to form xylulose 5-phosphate, which enters pentose phosphate pathway. The chain is Probable D-xylulose reductase A (xdhA) from Aspergillus fumigatus (strain CBS 144.89 / FGSC A1163 / CEA10) (Neosartorya fumigata).